Consider the following 501-residue polypeptide: MGNKQGKMDVILIGAGIMSATLGTLLKELAPEWDIVVFERLEEAGAESSNEWNNAGTGHAALCELNYTVEKADGSIDIGKAIKINEQFYVSLQFWAYLVNSGILRDPKDFVRPLPHMSFVQGEDNVAFLKKRHETMAANPLFKGMEFTDDPKKLAEWVPLMMEGRVVDEPIAATRIESGTDVNFGALTRQLFEHLKRKNVEIRYRHHVEDIKRTSDGLWELKVRNLDTGTVELHAAKFVFIGAGGGSLHLLQKSGIPEGKGIGGFPVSGLFMVCNNPEVVEQHHAKVYGKAKVGAPPMSVPHLDTRFIDNQKMLLFGPFAGFSPKFLKNGSMLDLFTSIKPHNVLTILAAGVKNMSLTNYLIQQVLLSKEQRMQELREFVPTAKSDEWDIVVAGQRVQVIKDTESGGKGTLQFGTEVVHAADGSIAALLGASPGASTAVHVMLEVMEKCFPERMNEWRAKVKEMIPSYGESLMKNEALLRQVQASTAEALGLNGHFAMQLA.

This sequence belongs to the MQO family. It depends on FAD as a cofactor.

The enzyme catalyses (S)-malate + a quinone = a quinol + oxaloacetate. The protein operates within carbohydrate metabolism; tricarboxylic acid cycle; oxaloacetate from (S)-malate (quinone route): step 1/1. The sequence is that of Probable malate:quinone oxidoreductase from Geobacillus kaustophilus (strain HTA426).